We begin with the raw amino-acid sequence, 485 residues long: Glycogen synthase (485 aa).

An ADP-alpha-D-glucose-binding site is contributed by Lys-15.

This sequence belongs to the glycosyltransferase 1 family. Bacterial/plant glycogen synthase subfamily.

It catalyses the reaction [(1-&gt;4)-alpha-D-glucosyl](n) + ADP-alpha-D-glucose = [(1-&gt;4)-alpha-D-glucosyl](n+1) + ADP + H(+). It functions in the pathway glycan biosynthesis; glycogen biosynthesis. In terms of biological role, synthesizes alpha-1,4-glucan chains using ADP-glucose. The sequence is that of Glycogen synthase from Fervidobacterium nodosum (strain ATCC 35602 / DSM 5306 / Rt17-B1).